The chain runs to 786 residues: Calcium-independent phospholipase A2-gamma (786 aa).

Residue asparagine 4 is glycosylated (N-linked (GlcNAc...) asparagine). Disordered regions lie at residues 158–180 (KKYS…IIDK), 225–285 (KENS…SLPI), and 321–348 (SKSQ…EEKK). Residues 225–245 (KENSHFQEKSELEGKKVEEGK) show a composition bias toward basic and acidic residues. 2 stretches are compositionally biased toward polar residues: residues 246 to 258 (SSSL…TSQA) and 266 to 285 (SAGT…SLPI). In terms of domain architecture, PNPLA spans 449-644 (LTIDGGGTRG…LLNNPSALAM (196 aa)). The GXGXXG motif lies at 453-458 (GGGTRG). Residues 483-503 (ICGVSTGAILAFMLGLFHLPL) traverse the membrane as a helical segment. The GXSXG motif lies at 485–489 (GVSTG). Serine 487 functions as the Nucleophile in the catalytic mechanism. Aspartate 631 functions as the Proton acceptor in the catalytic mechanism. Positions 631 to 633 (DGG) match the DGA/G motif. Lysine 740 is subject to N6-succinyllysine.

Expressed in kidney, heart and brain.

It is found in the endoplasmic reticulum membrane. Its subcellular location is the mitochondrion membrane. The protein localises to the peroxisome membrane. The catalysed reaction is a 1,2-diacyl-sn-glycero-3-phosphocholine + H2O = a 1-acyl-sn-glycero-3-phosphocholine + a fatty acid + H(+). It carries out the reaction a 1,2-diacyl-sn-glycero-3-phosphocholine + H2O = a 2-acyl-sn-glycero-3-phosphocholine + a fatty acid + H(+). The enzyme catalyses a 1,2-diacyl-sn-glycero-3-phosphoethanolamine + H2O = a 1-acyl-sn-glycero-3-phosphoethanolamine + a fatty acid + H(+). It catalyses the reaction a 1-O-(1Z-alkenyl)-2-acyl-sn-glycero-3-phosphocholine + H2O = a 1-O-(1Z-alkenyl)-sn-glycero-3-phosphocholine + a fatty acid + H(+). The catalysed reaction is a 1-acyl-sn-glycero-3-phosphocholine + H2O = sn-glycerol 3-phosphocholine + a fatty acid + H(+). It carries out the reaction 1-acyl-2-(9Z,12Z)-octadecadienoyl-sn-glycero-3-phosphocholine + H2O = a 1-acyl-sn-glycero-3-phosphocholine + (9Z,12Z)-octadecadienoate + H(+). The enzyme catalyses 1-acyl-2-(5Z,8Z,11Z,14Z-eicosatetraenoyl)-sn-glycero-3-phosphocholine + H2O = a 1-acyl-sn-glycero-3-phosphocholine + (5Z,8Z,11Z,14Z)-eicosatetraenoate + H(+). It catalyses the reaction 1-hexadecanoyl-2-(5Z,8Z,11Z,14Z-eicosatetraenoyl)-sn-glycero-3-phosphocholine + H2O = 1-hexadecanoyl-sn-glycero-3-phosphocholine + (5Z,8Z,11Z,14Z)-eicosatetraenoate + H(+). The catalysed reaction is 1-octadecanoyl-2-(9Z-octadecenoyl)-sn-glycero-3-phosphocholine + H2O = 1-octadecanoyl-sn-glycero-3-phosphocholine + (9Z)-octadecenoate + H(+). It carries out the reaction 1-hexadecanoyl-2-(9Z-octadecenoyl)-sn-glycero-3-phosphocholine + H2O = 1-hexadecanoyl-sn-glycero-3-phosphocholine + (9Z)-octadecenoate + H(+). The enzyme catalyses 1-hexadecanoyl-2-(9Z,12Z-octadecadienoyl)-sn-glycero-3-phosphocholine + H2O = (9Z,12Z)-octadecadienoate + 1-hexadecanoyl-sn-glycero-3-phosphocholine + H(+). It catalyses the reaction 1-acyl-2-(9Z,12Z)-octadecadienoyl-sn-glycero-3-phosphoethanolamine + H2O = a 1-acyl-sn-glycero-3-phosphoethanolamine + (9Z,12Z)-octadecadienoate + H(+). The catalysed reaction is 1-acyl-2-(5Z,8Z,11Z,14Z)-eicosatetraenoyl-sn-glycero-3-phosphoethanolamine + H2O = a 1-acyl-sn-glycero-3-phosphoethanolamine + (5Z,8Z,11Z,14Z)-eicosatetraenoate + H(+). It carries out the reaction 1-hexadecanoyl-2-(5Z,8Z,11Z,14Z-eicosatetraenoyl)-sn-glycero-3-phosphoethanolamine + H2O = 1-hexadecanoyl-sn-glycero-3-phosphoethanolamine + (5Z,8Z,11Z,14Z)-eicosatetraenoate + H(+). The enzyme catalyses 1-hexadecanoyl-2-(5Z,8Z,11Z,14Z-eicosatetraenoyl)-sn-glycero-3-phosphocholine + H2O = 2-(5Z,8Z,11Z,14Z)-eicosatetraenoyl-sn-glycero-3-phosphocholine + hexadecanoate + H(+). It catalyses the reaction 1-octadecanoyl-2-(9Z-octadecenoyl)-sn-glycero-3-phosphocholine + H2O = 2-(9Z-octadecenoyl)-sn-glycero-3-phosphocholine + octadecanoate + H(+). The catalysed reaction is 1-hexadecanoyl-2-(4Z,7Z,10Z,13Z,16Z,19Z-docosahexaenoyl)-sn-glycero-3-phosphocholine + H2O = 2-(4Z,7Z,10Z,13Z,16Z,19Z-docosahexaenoyl)-sn-glycero-3-phosphocholine + hexadecanoate + H(+). It carries out the reaction 1-O-(1Z)-hexadecenyl-2 (5Z,8Z,11Z,14Z)-eicosatetraenoyl-sn-glycero-3-phosphocholine + H2O = 1-(1Z-hexadecenyl)-sn-glycero-3-phosphocholine + (5Z,8Z,11Z,14Z)-eicosatetraenoate + H(+). The enzyme catalyses 1-O-(1Z-hexadecenyl)-2-(9Z-octadecenoyl)-sn-glycero-3-phosphocholine + H2O = 1-(1Z-hexadecenyl)-sn-glycero-3-phosphocholine + (9Z)-octadecenoate + H(+). It catalyses the reaction 1-hexadecanoyl-sn-glycero-3-phosphocholine + H2O = sn-glycerol 3-phosphocholine + hexadecanoate + H(+). The catalysed reaction is 1',3'-bis-[1,2-di-(9Z,12Z-octadecadienoyl)-sn-glycero-3-phospho]-glycerol + H2O = 1'-[1,2-di-(9Z,12Z-octadecadienoyl)-sn-glycero-3-phospho]-3'-[1-(9Z,12Z-octadecadienoyl)-sn-glycero-3-phospho]-glycerol + (9Z,12Z)-octadecadienoate + H(+). It carries out the reaction 1'-[1-acyl-2-(9-hydroxy-(10E,12Z)-octadecadienoyl)-sn-glycero-3-phospho]-3'-[1,2-diacyl-sn-glycero-3-phospho]-glycerol + H2O = 9-hydroxy-(10E,12Z)-octadecadienoate + 1'-[1,2-diacyl-sn-glycero-3-phospho],3'-[1-acyl-sn-glycero-3-phospho]-glycerol + H(+). It participates in phospholipid metabolism. With respect to regulation, calcium-independent phospholipase. Its function is as follows. Calcium-independent and membrane-bound phospholipase, that catalyzes the esterolytic cleavage of fatty acids from glycerophospholipids to yield free fatty acids and lysophospholipids, hence regulating membrane physical properties and the release of lipid second messengers and growth factors. Hydrolyzes phosphatidylethanolamine, phosphatidylcholine and probably phosphatidylinositol with a possible preference for the former. Has also a broad substrate specificity in terms of fatty acid moieties, hydrolyzing saturated and mono-unsaturated fatty acids at nearly equal rates from either the sn-1 or sn-2 position in diacyl phosphatidylcholine. However, has a weak activity toward polyunsaturated fatty acids at the sn-2 position, and thereby favors the production of 2-arachidonoyl lysophosphatidylcholine, a key branch point metabolite in eicosanoid signaling. On the other hand, can produce arachidonic acid from the sn-1 position of diacyl phospholipid and from the sn-2 position of arachidonate-containing plasmalogen substrates. Therefore, plays an important role in the mobilization of arachidonic acid in response to cellular stimuli and the generation of lipid second messengers. Can also hydrolyze lysophosphatidylcholine. In the mitochondrial compartment, catalyzes the hydrolysis and release of oxidized aliphatic chains from cardiolipin and integrates mitochondrial bioenergetics and signaling. It is essential for maintaining efficient bioenergetic mitochondrial function through tailoring mitochondrial membrane lipid metabolism and composition. The polypeptide is Calcium-independent phospholipase A2-gamma (Oryctolagus cuniculus (Rabbit)).